The sequence spans 1358 residues: MSYSYAEKKRIRKEFGVLPHILDVPYLLSIQTESYKKFLTVDAAKGRLHSGLEIVLKQSFPVESKNGQYELHYVDYQIGEPTFDETECQVRGATYDAPLNVKLRLVVYNKDALPNEKIVEDIREEYVYMGDIPLMTTNGTFIINGTERVVVSQLHRSPGVFFSKDDSEEGAFSARIIPYRGSWLDFEFDSKGIIWARIDRKRKFCATVILKALGYTQEQILENFSESKTITFNSKGFALRLDNLSNMKGELLKFDIVDAQDNVIVKKNKKLTSRDVKKIKDAGVDSVAIDFDLVSTLRVAKDIVNEATGEVIAYANDDVTESLLESCVEVGMLELEVIDFITTERGRYISDTLKYDLTRNTDEALVEIYKVLRPGDPPAAASVKALFEGLFFIESRYSLSDIGRMKLNARLGSDKVSKDIYTLENSDIVGVIEELINIRDGKGKVDDIDHLGNRRVRSVGEMVENQFRIGLYRVEKGIRESMSLVHKDKLMPKDIVNSKPITAAIKEFFTSGALSQFMDQDNPLSEVTHKRRISALGPGGLSRDRAGFEVRDVHATHYGRLCPIETPEGPNIGLINSLASYARVNDYGFLEAPYRKVVDGKVTDEIEYLSAIDEDNYVIAQASTKLDENNHFVEDIIQCRSGGEAIFTESSRVQYMDVSAKQMVSAAAALIPFLEHDDANRVLMGANMQRQAVPTLKSEKPLVGTGMEKIVARDSGNCIIARNVGEVAEVDSNRIVIKVDTEKSQTSNLVDIYSLTKFKRSNKNTCINQRPIVNVGDKVEAGDILADGFATDFGELSLGHNLMVAFMPWNGYNFEDSILLSERIVKDDKYTSIHIEEFTCVARDTKLGPEEITADIPNVSESSLAKLDESGIVHIGANVEAGDILVAKITPKAEQQLTPEERLLRAIFNEKASNVVDSSLRMPSGTSGTVISVQVFENDKGGKSKRALKIEKELIDKARKDFDEEFAVIESVVKSSIEQEVVGAKIQKAKGLKKGAILTKEFLATLPLSKWLEISFEDEKLEEKVQNAREYYEEAKIAIDAKFEAKKKSITQSNELSPGVLKTVKVFVAIKKRIQPGDKMAGRHGNKGVVSRVLPVEDMPYMEDGTPVDVCLNPLGIPSRMNIGQILEAHLGLASYGLGKKIEKTLEKTRKAAELRKTLEEVYNSVGDKKVNLEALNDEEILTLCDNLKGGVPIATPVFDGAKEEDIKSLLKIGGFATNGQMKLFDGRTGKPFDRHVTVGYMYMLKLDHLVDDKMHARSTGSYSLVTQQPLGGKAQFGGQRFGEMEVWALQAYGAAYTLREMLTVKSDDIAGRSKMYKNIVDGKLTMNVDVPESFNVLRNEVRALGIDMDFDYSSEEE.

It belongs to the RNA polymerase beta chain family. As to quaternary structure, the RNAP catalytic core consists of 2 alpha, 1 beta, 1 beta' and 1 omega subunit. When a sigma factor is associated with the core the holoenzyme is formed, which can initiate transcription.

It carries out the reaction RNA(n) + a ribonucleoside 5'-triphosphate = RNA(n+1) + diphosphate. DNA-dependent RNA polymerase catalyzes the transcription of DNA into RNA using the four ribonucleoside triphosphates as substrates. This is DNA-directed RNA polymerase subunit beta from Francisella tularensis subsp. holarctica (strain FTNF002-00 / FTA).